A 234-amino-acid polypeptide reads, in one-letter code: Elongation factor Tu, chloroplastic (234 aa).

The tr-type G domain occupies 1–125; sequence KNMITGAAQM…KVDSYIPTPE (125 aa). Residue 47 to 50 participates in GTP binding; the sequence is NKQD.

It belongs to the TRAFAC class translation factor GTPase superfamily. Classic translation factor GTPase family. EF-Tu/EF-1A subfamily.

It is found in the plastid. The protein resides in the chloroplast. The catalysed reaction is GTP + H2O = GDP + phosphate + H(+). Its function is as follows. GTP hydrolase that promotes the GTP-dependent binding of aminoacyl-tRNA to the A-site of ribosomes during protein biosynthesis. This is Elongation factor Tu, chloroplastic (tufA) from Pandorina morum (Freshwater green alga).